A 346-amino-acid chain; its full sequence is Protein tas (346 aa).

Tyrosine 53 acts as the Proton donor in catalysis. 234–244 (SCLGFGTLTGK) contacts NADP(+).

It belongs to the aldo/keto reductase family. Aldo/keto reductase 2 subfamily.

The chain is Protein tas (tas) from Escherichia coli (strain K12).